Reading from the N-terminus, the 96-residue chain is Co-chaperonin GroES (96 aa).

The protein belongs to the GroES chaperonin family. As to quaternary structure, heptamer of 7 subunits arranged in a ring. Interacts with the chaperonin GroEL.

The protein resides in the cytoplasm. Its function is as follows. Together with the chaperonin GroEL, plays an essential role in assisting protein folding. The GroEL-GroES system forms a nano-cage that allows encapsulation of the non-native substrate proteins and provides a physical environment optimized to promote and accelerate protein folding. GroES binds to the apical surface of the GroEL ring, thereby capping the opening of the GroEL channel. The protein is Co-chaperonin GroES of Alcanivorax borkumensis (strain ATCC 700651 / DSM 11573 / NCIMB 13689 / SK2).